The chain runs to 318 residues: Porphobilinogen deaminase (318 aa).

An S-(dipyrrolylmethanemethyl)cysteine modification is found at Cys248.

The protein belongs to the HMBS family. Monomer. Requires dipyrromethane as cofactor.

It catalyses the reaction 4 porphobilinogen + H2O = hydroxymethylbilane + 4 NH4(+). Its pathway is porphyrin-containing compound metabolism; protoporphyrin-IX biosynthesis; coproporphyrinogen-III from 5-aminolevulinate: step 2/4. In terms of biological role, tetrapolymerization of the monopyrrole PBG into the hydroxymethylbilane pre-uroporphyrinogen in several discrete steps. The chain is Porphobilinogen deaminase from Caulobacter sp. (strain K31).